Here is a 152-residue protein sequence, read N- to C-terminus: UPF0178 protein YaiI (152 aa).

The protein belongs to the UPF0178 family.

The protein is UPF0178 protein YaiI of Shigella flexneri.